Consider the following 780-residue polypeptide: Putative ABC transporter ATP-binding protein BL0043 (780 aa).

2 consecutive ABC transporter domains span residues 2-238 and 282-531; these read LKDI…QSET and IRVS…GPAH. 34-41 serves as a coordination point for ATP; it reads GPNGSGKS. The interval 230-272 is disordered; the sequence is AEAVSQSETEGSIGTEAAPSRPTNDSPRQREREDGSELPLLSD. 316-323 contributes to the ATP binding site; it reads GVNGSGKS. Transmembrane regions (helical) follow at residues 551–573, 586–608, 623–645, and 759–778; these read FTMFAVNTPTQLALGIAITLAVI, SIHPILILLVLMGVVNLFVVRTG, GVTIAVLYACRFALVIILGAVFL, and IAARDLIFAAAVIIYIAAII.

This sequence belongs to the ABC transporter superfamily.

It is found in the cell membrane. Probably part of an ABC transporter complex. Responsible for energy coupling to the transport system. This chain is Putative ABC transporter ATP-binding protein BL0043, found in Bifidobacterium longum (strain NCC 2705).